Reading from the N-terminus, the 1659-residue chain is Intersectin-2 (1659 aa).

Residues 22–110 enclose the EH 1 domain; that stretch reads ERTKHDKQFD…PIMKQPPMFS (89 aa). An EF-hand 1 domain is found at 54-89; that stretch reads LPAPVLAEIWALSDLNKDGKMDQQEFSIAMKLIKLK. The Ca(2+) site is built by D67, N69, D71, K73, and E78. A phosphoserine mark is found at S110, S211, and S231. Over residues 220–231 the composition is skewed to low complexity; sequence STSSTASLSGNS. Positions 220–242 are disordered; sequence STSSTASLSGNSPKTGTSEWAVP. The 90-residue stretch at 245–334 folds into the EH 2 domain; that stretch reads SRLKYRQKFN…PELVPPSFRG (90 aa). The 36-residue stretch at 278–313 folds into the EF-hand 2 domain; that stretch reads LSQTQLATIWTLADIDGDGQLKAEEFILAMHLTDMA. Residues 335–382 are disordered; the sequence is GKQVDSVNGTLPSYQKTQEEEPQKKLPVTFEDKRKANYERGNMELEKR. Over residues 339-350 the composition is skewed to polar residues; it reads DSVNGTLPSYQK. Residues 351-382 are compositionally biased toward basic and acidic residues; it reads TQEEEPQKKLPVTFEDKRKANYERGNMELEKR. Residues 365 to 717 adopt a coiled-coil conformation; the sequence is EDKRKANYER…KAEAKQSETA (353 aa). Y554 is subject to Phosphotyrosine. Residue T574 is modified to Phosphothreonine. Positions 689–713 are enriched in basic and acidic residues; it reads KQKRLQEEKSQDKTQEEERKAEAKQ. Residues 689-715 are disordered; the sequence is KQKRLQEEKSQDKTQEEERKAEAKQSE. Positions 718–779 constitute an SH3 1 domain; sequence SALVNYRALY…PCNYVEKVLS (62 aa). Residue T836 is modified to Phosphothreonine. S838 and S843 each carry phosphoserine. In terms of domain architecture, SH3 2 spans 852–910; that stretch reads VENLKAQALCSWTAKKENHLNFSKHDVITVLEQQENWWFGEVHGGRGWFPKSYVKLIPG. The residue at position 922 (Y922) is a Phosphotyrosine. SH3 domains lie at 942–1000, 1014–1078, and 1088–1147; these read PVGE…PKDQ, KKPE…LLGP, and HAVC…MTTD. The 188-residue stretch at 1170–1357 folds into the DH domain; it reads KRQGYIHELI…EELCSQVNEG (188 aa). One can recognise a PH domain in the interval 1396–1506; it reads KLLHSGKLYK…WVQKIKGASE (111 aa). In terms of domain architecture, C2 spans 1514 to 1630; that stretch reads KKREKAYQAR…RTEQESKGPT (117 aa). Residues D1602, S1605, and D1608 each coordinate Ca(2+).

In terms of assembly, belongs to a complex that may contain multimers of ITSN1, ITSN2 and EPS15, and different partners according to the step in the endocytic process. Interacts with ADAM15. Interacts with FASLG. Interacts with ANKRD54. Interacts with FCHO2. Requires Ca(2+) as cofactor. Widely expressed in adult tissues.

The protein localises to the cytoplasm. In terms of biological role, adapter protein that may provide indirect link between the endocytic membrane traffic and the actin assembly machinery. May regulate the formation of clathrin-coated vesicles (CCPs). Seems to be involved in CCPs maturation including invagination or budding. Involved in endocytosis of integrin beta-1 (ITGB1) and transferrin receptor (TFR). Plays a role in dendrite formation by melanocytes. The chain is Intersectin-2 (Itsn2) from Mus musculus (Mouse).